We begin with the raw amino-acid sequence, 878 residues long: Aminopeptidase M1-A (878 aa).

The segment at valine 105–valine 212 is required for membrane association. Residues glutamate 145 and glycine 278 to asparagine 282 each bind substrate. Histidine 314 contacts Zn(2+). Glutamate 315 functions as the Proton acceptor in the catalytic mechanism. Zn(2+)-binding residues include histidine 318 and glutamate 337. The Dileucine internalization motif signature appears at leucine 727 to leucine 728.

The protein belongs to the peptidase M1 family. Homodimer. Requires Zn(2+) as cofactor.

It is found in the membrane. Its subcellular location is the microsome membrane. The protein localises to the cytoplasm. It carries out the reaction Release of an N-terminal amino acid, Xaa-|-Yaa- from a peptide, amide or arylamide. Xaa is preferably Ala, but may be most amino acids including Pro (slow action). When a terminal hydrophobic residue is followed by a prolyl residue, the two may be released as an intact Xaa-Pro dipeptide.. The polypeptide is Aminopeptidase M1-A (Oryza sativa subsp. japonica (Rice)).